A 510-amino-acid chain; its full sequence is Maturase K (510 aa).

The protein belongs to the intron maturase 2 family. MatK subfamily.

Its subcellular location is the plastid. It is found in the chloroplast. Functionally, usually encoded in the trnK tRNA gene intron. Probably assists in splicing its own and other chloroplast group II introns. This chain is Maturase K, found in Grahamia bracteata.